A 124-amino-acid chain; its full sequence is MGLYKKVNRNEKRLIRHKRIRKKVFGTAERPRLCVYKSLKYIYAQIIDDEKGHTLVAASSLEPEIKSRLTSTKSIEAAQYIGRVIAERAKEKGITKVVFDRGGYPYHGRVKALADAAREAGLEF.

The protein belongs to the universal ribosomal protein uL18 family. As to quaternary structure, part of the 50S ribosomal subunit; part of the 5S rRNA/L5/L18/L25 subcomplex. Contacts the 5S and 23S rRNAs.

In terms of biological role, this is one of the proteins that bind and probably mediate the attachment of the 5S RNA into the large ribosomal subunit, where it forms part of the central protuberance. The protein is Large ribosomal subunit protein uL18 of Caldicellulosiruptor saccharolyticus (strain ATCC 43494 / DSM 8903 / Tp8T 6331).